The sequence spans 237 residues: ATP synthase subunit a (237 aa).

A run of 5 helical transmembrane segments spans residues 17 to 37 (LSDM…AVAA), 75 to 95 (FLTL…LGLP), 112 to 132 (DATV…YYGV), 179 to 201 (ILLG…GAAI), and 214 to 234 (GTIQ…HKVS).

Belongs to the ATPase A chain family. As to quaternary structure, F-type ATPases have 2 components, CF(1) - the catalytic core - and CF(0) - the membrane proton channel. CF(1) has five subunits: alpha(3), beta(3), gamma(1), delta(1), epsilon(1). CF(0) has three main subunits: a(1), b(2) and c(9-12). The alpha and beta chains form an alternating ring which encloses part of the gamma chain. CF(1) is attached to CF(0) by a central stalk formed by the gamma and epsilon chains, while a peripheral stalk is formed by the delta and b chains.

The protein localises to the cell membrane. Its function is as follows. Key component of the proton channel; it plays a direct role in the translocation of protons across the membrane. In Geobacillus kaustophilus (strain HTA426), this protein is ATP synthase subunit a.